The primary structure comprises 632 residues: Myrcene synthase TPS3FN, chloroplastic (632 aa).

The transit peptide at 1 to 55 (MHCMAVHQFSPSIVSSLPTISTYNNNHFCRFFTPKTSISPISKTKSKSSTCYPIQ) directs the protein to the chloroplast. (2E)-geranyl diphosphate contacts are provided by Arg343, Asp380, Asp384, Arg524, and Asp527. Asp380 and Asp384 together coordinate Mg(2+). Residues 380 to 384 (DDIYD) carry the DDXXD motif motif. The Mg(2+) site is built by Asp527, Thr531, and Glu535.

This sequence belongs to the terpene synthase family. Tpsb subfamily. Mg(2+) is required as a cofactor. Mn(2+) serves as cofactor. In terms of tissue distribution, expressed in glandular trichomes two to four weeks after flowering onset.

The protein resides in the plastid. The protein localises to the chloroplast. The enzyme catalyses (2E)-geranyl diphosphate = beta-myrcene + diphosphate. Its pathway is secondary metabolite biosynthesis; terpenoid biosynthesis. In terms of biological role, involved in monoterpene (C10) olefins biosynthesis, constituants of cannabinoids and terpenoids-rich resins. Catalyzes strictly the conversion of (2E)-geranyl diphosphate to beta-myrcene. This is Myrcene synthase TPS3FN, chloroplastic from Cannabis sativa (Hemp).